Consider the following 76-residue polypeptide: Small ribosomal subunit protein bS18 (76 aa).

The protein belongs to the bacterial ribosomal protein bS18 family. As to quaternary structure, part of the 30S ribosomal subunit. Forms a tight heterodimer with protein bS6.

In terms of biological role, binds as a heterodimer with protein bS6 to the central domain of the 16S rRNA, where it helps stabilize the platform of the 30S subunit. In Stenotrophomonas maltophilia (strain R551-3), this protein is Small ribosomal subunit protein bS18.